The chain runs to 257 residues: Pyridoxine 5'-phosphate synthase (257 aa).

Asn16 provides a ligand contact to 3-amino-2-oxopropyl phosphate. 18–19 (DH) serves as a coordination point for 1-deoxy-D-xylulose 5-phosphate. Arg27 is a 3-amino-2-oxopropyl phosphate binding site. His52 serves as the catalytic Proton acceptor. Residues Arg54 and His59 each contribute to the 1-deoxy-D-xylulose 5-phosphate site. The active-site Proton acceptor is Glu79. Residue Thr109 coordinates 1-deoxy-D-xylulose 5-phosphate. Residue His200 is the Proton donor of the active site. Residues Gly201 and 222 to 223 (GH) contribute to the 3-amino-2-oxopropyl phosphate site.

It belongs to the PNP synthase family. In terms of assembly, homooctamer; tetramer of dimers.

Its subcellular location is the cytoplasm. It catalyses the reaction 3-amino-2-oxopropyl phosphate + 1-deoxy-D-xylulose 5-phosphate = pyridoxine 5'-phosphate + phosphate + 2 H2O + H(+). Its pathway is cofactor biosynthesis; pyridoxine 5'-phosphate biosynthesis; pyridoxine 5'-phosphate from D-erythrose 4-phosphate: step 5/5. In terms of biological role, catalyzes the complicated ring closure reaction between the two acyclic compounds 1-deoxy-D-xylulose-5-phosphate (DXP) and 3-amino-2-oxopropyl phosphate (1-amino-acetone-3-phosphate or AAP) to form pyridoxine 5'-phosphate (PNP) and inorganic phosphate. The chain is Pyridoxine 5'-phosphate synthase from Burkholderia pseudomallei (strain 1710b).